Consider the following 436-residue polypeptide: Sulfopropanediol 3-dehydrogenase (436 aa).

Positions 118, 180, and 203 each coordinate NAD(+). Zn(2+)-binding residues include Gln-248 and His-251. Catalysis depends on proton acceptor residues Glu-318 and His-319. Residues Asp-352 and His-411 each contribute to the Zn(2+) site.

This sequence belongs to the histidinol dehydrogenase family. HpsN subfamily. The cofactor is Zn(2+).

The catalysed reaction is (2R)-3-sulfopropanediol + 2 NAD(+) + H2O = (2R)-3-sulfolactate + 2 NADH + 3 H(+). Catalyzes the NAD-dependent oxidation of (R)-2,3-dihydroxypropane-1-sulfonate to (R)-3-sulfolactate. The sequence is that of Sulfopropanediol 3-dehydrogenase from Cupriavidus pinatubonensis (strain JMP 134 / LMG 1197) (Cupriavidus necator (strain JMP 134)).